The primary structure comprises 163 residues: Epididymal-specific lipocalin-6 (163 aa).

Positions 1–20 are cleaved as a signal peptide; that stretch reads MGGLLLAAFLALVSVPRAQA.

Belongs to the calycin superfamily. Lipocalin family. Predominantly expressed in epididymis.

Its subcellular location is the secreted. Its function is as follows. May play a role in male fertility. This is Epididymal-specific lipocalin-6 (LCN6) from Homo sapiens (Human).